Here is a 1014-residue protein sequence, read N- to C-terminus: Protein argonaute 2 (1014 aa).

A compositionally biased stretch (basic and acidic residues) spans 1 to 15 (MERGGYRGGRGDGRG). The tract at residues 1–137 (MERGGYRGGR…PSTSTTVVSE (137 aa)) is disordered. Composition is skewed to gly residues over residues 18–29 (GRGYGGGGGGGE) and 49–58 (RGGGNRGQGR). Residues 83-104 (QFQQPRPQVAPQPSQAPASYAG) are compositionally biased toward low complexity. A compositionally biased stretch (gly residues) spans 105 to 114 (SVGGVAGRGA). Positions 121-137 (VPSDSASPSTSTTVVSE) are enriched in low complexity. The PAZ domain occupies 369–482 (SVIEYLKLYF…VPMEFCDLVE (114 aa)). The 300-residue stretch at 666 to 965 (LVLCAMSRKD…VAFRGRMYHE (300 aa)) folds into the Piwi domain. Interaction with guide RNA stretches follow at residues 857–858 (KR), 900–908 (HHGGIGTSK), and 937–959 (FTRCTKPVSLVPPVYYADMVAFR).

This sequence belongs to the argonaute family. Ago subfamily. As to quaternary structure, interacts with NERD.

Functionally, involved in RNA-mediated post-transcriptional gene silencing (PTGS). Main component of the RNA-induced silencing complex (RISC) that binds to a short guide RNA such as microRNA (miRNA) or small interfering RNA (siRNA). RISC uses the mature miRNA or siRNA as a guide for slicer-directed cleavage of homologous mRNAs to repress gene expression. Associates mainly with siRNAs of 21 nucleotide in length and preferentially recruits small RNAs with a 5' terminal adenosine. Probably involved in antiviral RNA silencing. Associates with siRNA derived from cucumber mosaic virus (CMV). Targeted by turnip yellows virus (TuYV) protein P0 (via F-box-like domain) for probable proteasome degradation and thereby inactivating AGO2 function in RNA silencing. Required to direct NERD-dependent DNA methylation and silencing. The chain is Protein argonaute 2 (AGO2) from Arabidopsis thaliana (Mouse-ear cress).